Reading from the N-terminus, the 267-residue chain is Putative hydro-lyase Arth_3576 (267 aa).

It belongs to the D-glutamate cyclase family.

The chain is Putative hydro-lyase Arth_3576 from Arthrobacter sp. (strain FB24).